The primary structure comprises 729 residues: Serine/threonine-protein kinase TBK1 (729 aa).

Residues 9–310 (WLLSDILGQG…ETSDVLHRMV (302 aa)) enclose the Protein kinase domain. ATP is bound at residue 15–23 (LGQGATANV). Lys30 is covalently cross-linked (Glycyl lysine isopeptide (Lys-Gly) (interchain with G-Cter in ubiquitin)). Lys38 lines the ATP pocket. The Proton acceptor role is filled by Asp135. Ser172 is subject to Phosphoserine; by autocatalysis and IKKB. The Ubiquitin-like domain maps to 309–385 (MVIHVFSLQH…ENPIFVTSRE (77 aa)). Lys401 participates in a covalent cross-link: Glycyl lysine isopeptide (Lys-Gly) (interchain with G-Cter in ubiquitin). Coiled-coil stretches lie at residues 407 to 657 (DLDG…LQET) and 658 to 713 (LPQK…ILER). An interaction with AZI2, TANK and TBKBP1 region spans residues 621-729 (RKMLHLRKQL…DGGLRNVDCL (109 aa)). Lys670 is covalently cross-linked (Glycyl lysine isopeptide (Lys-Gly) (interchain with G-Cter in ubiquitin)). Ser716 carries the phosphoserine modification.

It belongs to the protein kinase superfamily. Ser/Thr protein kinase family. I-kappa-B kinase subfamily. As to quaternary structure, homodimer. Interacts with DDX3X, TIRAP and TRAF2. Part of a ternary complex consisting of TANK, TRAF2 and TBK1. Interacts with AZI2, TANK and TBKBP1; these interactions are mutually exclusive and mediate TBK1 activation. Interacts with GSK3B; this interaction promotes TBK1 self-association and autophosphorylation. Interacts with SIKE1; SIKE1 is associated with TBK1 under physiological condition and dissociated from TBK1 upon viral infection or TLR3 stimulation. Interacts with IRF3, leading to IRF3 phosphorylation. Interacts with RIGI. Interacts with CYLD. Interacts with OPTN and TRAF3. Interacts with SRC. Interacts with the exocyst complex subunit SEC5/EXOC2; this interaction is sufficient to trigger TBK1 activity. Interacts with STING1, leading to STING1 phosphorylation. Interacts with IFIT3 (via N-terminus). Interacts with MAVS; interaction only takes place in the presence of IFIT3 and leads to MAVS phosphorylation. Interacts (via protein kinase domain) with TTLL12 (via TTL domain); the interaction prevents MAVS binding to TBK1. Interacts with TICAM1; this interaction is enhanced in the presence of WDFY1 and leads to TICAM1 phosphorylation. Interacts with TRIM26. Interacts with TRIM23. Interacts with TTC4 and IKBKE. Interacts with HNRNPA2B1. Interacts with DDX3X. Interacts with TRIM14. Interacts with CEP170; efficient complex formation may be dependent on the presence of CCDC61. Interacts with TRAF3IP3. Interacts with HSP90AA1; the interaction mediates TBK1 association with TOMM70. Interacts with TAX1BP1. Interacts with kinase IKBKB; the complex interacts with STAT1, leading to phosphorylation of STAT1 on 'Thr-748' by IKBKB. Interacts with ICOS; this interaction is critical for the maturation of T follicular regulatory cells. Interacts with RNF144B; this interaction prevents TBK1 phosphorylation and subsequent activation. Interacts with ASB8; this interaction promotes TBK1 proteasomal degradation. Autophosphorylation at Ser-172 activates the kinase, and is an essential step for virus-triggered signaling. Phosphorylated by IKBKB/IKKB at Ser-172. Phosphorylation requires homodimerization and ubiquitination at Lys-30 and Lys-401. Dephosphorylated at Ser-172 by PPM1B and this negatively regulates its role in mediating antiviral response. Post-translationally, 'Lys-63'-linked polyubiquitination by MIB1 after RNA virus infection, or by NRDP1 after LPS stimulation at Lys-30 and Lys-401, participates in kinase activation. 'Lys-48'-linked polyubiquitination at Lys-670 by DTX4 leads to proteasomal degradation. 'Lys-48'-linked polyubiquitination by TRAIP also leads to proteasomal degradation. 'Lys-48'-linked polyubiquitination by TRAF7; leading to proteasomal degradation. 'Lys-63'-linked polyubiquitination by RNF128 at Lys-30 and Lys-401 leads to the activation of antiviral responses. 'Lys-48'-linked polyubiquitination after 'lys-33'-linked deubiquitination by USP38 promotes TBK1 degradation.

It is found in the cytoplasm. The catalysed reaction is L-seryl-[protein] + ATP = O-phospho-L-seryl-[protein] + ADP + H(+). It catalyses the reaction L-threonyl-[protein] + ATP = O-phospho-L-threonyl-[protein] + ADP + H(+). Kinase activity is inhibited competitively by amlexanox. Functionally, serine/threonine kinase that plays an essential role in regulating inflammatory responses to foreign agents. Following activation of toll-like receptors by viral or bacterial components, associates with TRAF3 and TANK and phosphorylates interferon regulatory factors (IRFs) IRF3 and IRF7 as well as DDX3X. This activity allows subsequent homodimerization and nuclear translocation of the IRFs leading to transcriptional activation of pro-inflammatory and antiviral genes including IFNA and IFNB. In order to establish such an antiviral state, TBK1 form several different complexes whose composition depends on the type of cell and cellular stimuli. Thus, several scaffolding molecules including FADD, TRADD, MAVS, AZI2, TANK or TBKBP1/SINTBAD can be recruited to the TBK1-containing-complexes. Plays a key role in IRF3 activation: acts by first phosphorylating innate adapter proteins MAVS, STING1 and TICAM1 on their pLxIS motif, leading to recruitment of IRF3, thereby licensing IRF3 for phosphorylation by TBK1. Under particular conditions, functions as a NF-kappa-B effector by phosphorylating NF-kappa-B inhibitor alpha/NFKBIA, IKBKB or RELA to translocate NF-Kappa-B to the nucleus. Restricts bacterial proliferation by phosphorylating the autophagy receptor OPTN/Optineurin on 'Ser-177', thus enhancing LC3 binding affinity and antibacterial autophagy. Phosphorylates SMCR8 component of the C9orf72-SMCR8 complex, promoting autophagosome maturation. Phosphorylates ATG8 proteins MAP1LC3C and GABARAPL2, thereby preventing their delipidation and premature removal from nascent autophagosomes. Seems to play a role in energy balance regulation by sustaining a state of chronic, low-grade inflammation in obesity, which leads to a negative impact on insulin sensitivity. Acts both as a positive and negative regulator of the mTORC1 complex, depending on the context: activates mTORC1 in response to growth factors by catalyzing phosphorylation of MTOR, while it limits the mTORC1 complex by promoting phosphorylation of RPTOR. Acts as a positive regulator of the mTORC2 complex by mediating phosphorylation of MTOR, leading to increased phosphorylation and activation of AKT1. Phosphorylates and activates AKT1. Involved in the regulation of TNF-induced RIPK1-mediated cell death, probably acting via CYLD phosphorylation that in turn controls RIPK1 ubiquitination status. Also participates in the differentiation of T follicular regulatory cells together with the receptor ICOS. This is Serine/threonine-protein kinase TBK1 from Mus musculus (Mouse).